A 426-amino-acid polypeptide reads, in one-letter code: L-cysteine:1D-myo-inositol 2-amino-2-deoxy-alpha-D-glucopyranoside ligase (426 aa).

C45 is a Zn(2+) binding site. L-cysteinyl-5'-AMP-binding positions include 45–48, T60, and 83–85; these read CGIT and NVT. The 'HIGH' region motif lies at 47-57; sequence ITPYDATHIGH. The short motif at 199-204 is the 'ERGGDP' region element; sequence ERGGDP. L-cysteinyl-5'-AMP is bound at residue W239. C243 contacts Zn(2+). 261 to 263 provides a ligand contact to L-cysteinyl-5'-AMP; it reads GSD. A Zn(2+)-binding site is contributed by H268. V294 contributes to the L-cysteinyl-5'-AMP binding site. Positions 300–304 match the 'KMSKS' region motif; sequence KMSKS.

It belongs to the class-I aminoacyl-tRNA synthetase family. MshC subfamily. Monomer. The cofactor is Zn(2+).

It catalyses the reaction 1D-myo-inositol 2-amino-2-deoxy-alpha-D-glucopyranoside + L-cysteine + ATP = 1D-myo-inositol 2-(L-cysteinylamino)-2-deoxy-alpha-D-glucopyranoside + AMP + diphosphate + H(+). Its function is as follows. Catalyzes the ATP-dependent condensation of GlcN-Ins and L-cysteine to form L-Cys-GlcN-Ins. This chain is L-cysteine:1D-myo-inositol 2-amino-2-deoxy-alpha-D-glucopyranoside ligase, found in Clavibacter michiganensis subsp. michiganensis (strain NCPPB 382).